The primary structure comprises 448 residues: tRNA modification GTPase MnmE (448 aa).

Arg-25, Glu-82, and Lys-121 together coordinate (6S)-5-formyl-5,6,7,8-tetrahydrofolate. The TrmE-type G domain maps to 217 to 372 (GLTTVIAGRP…LRQEIIRRAG (156 aa)). A K(+)-binding site is contributed by Asn-227. GTP is bound by residues 227–232 (NVGKSS), 246–252 (TEIPGTT), 271–274 (DTAG), and 353–355 (SAR). Ser-231 is a binding site for Mg(2+). Residues Thr-246, Ile-248, and Thr-251 each contribute to the K(+) site. A Mg(2+)-binding site is contributed by Thr-252. Lys-448 provides a ligand contact to (6S)-5-formyl-5,6,7,8-tetrahydrofolate.

The protein belongs to the TRAFAC class TrmE-Era-EngA-EngB-Septin-like GTPase superfamily. TrmE GTPase family. Homodimer. Heterotetramer of two MnmE and two MnmG subunits. K(+) serves as cofactor.

Its subcellular location is the cytoplasm. Functionally, exhibits a very high intrinsic GTPase hydrolysis rate. Involved in the addition of a carboxymethylaminomethyl (cmnm) group at the wobble position (U34) of certain tRNAs, forming tRNA-cmnm(5)s(2)U34. This is tRNA modification GTPase MnmE from Methylococcus capsulatus (strain ATCC 33009 / NCIMB 11132 / Bath).